The following is a 334-amino-acid chain: Tyrosine-protein kinase SRK3 (334 aa).

Positions 1–42 (IRTLDDGGFYMANRISFPTLQNLVSHYMMDADGLAQRLSRPC) constitute an SH2 domain. A Protein kinase domain is found at 66–321 (IQLQRKLGQG…LKNLLEDYYV (256 aa)). Residues 72 to 80 (LGQGNFGEV) and Lys94 contribute to the ATP site. Asp186 functions as the Proton acceptor in the catalytic mechanism.

It belongs to the protein kinase superfamily. Tyr protein kinase family.

The protein localises to the cytoplasm. The enzyme catalyses L-tyrosyl-[protein] + ATP = O-phospho-L-tyrosyl-[protein] + ADP + H(+). The protein is Tyrosine-protein kinase SRK3 (SRK3) of Spongilla lacustris (Freshwater sponge).